The following is a 425-amino-acid chain: Enolase (425 aa).

Gln165 lines the (2R)-2-phosphoglycerate pocket. Glu207 acts as the Proton donor in catalysis. Residues Asp244, Glu285, and Asp312 each coordinate Mg(2+). (2R)-2-phosphoglycerate contacts are provided by Lys337, Arg366, Ser367, and Lys388. Lys337 serves as the catalytic Proton acceptor.

Belongs to the enolase family. Mg(2+) serves as cofactor.

The protein resides in the cytoplasm. The protein localises to the secreted. It is found in the cell surface. It carries out the reaction (2R)-2-phosphoglycerate = phosphoenolpyruvate + H2O. Its pathway is carbohydrate degradation; glycolysis; pyruvate from D-glyceraldehyde 3-phosphate: step 4/5. Its function is as follows. Catalyzes the reversible conversion of 2-phosphoglycerate (2-PG) into phosphoenolpyruvate (PEP). It is essential for the degradation of carbohydrates via glycolysis. This is Enolase from Wolbachia sp. subsp. Brugia malayi (strain TRS).